Here is a 181-residue protein sequence, read N- to C-terminus: Ribulose bisphosphate carboxylase small subunit, chloroplastic (181 aa).

A chloroplast-targeting transit peptide spans 1-56; sequence MASISSSAIATVNRTTSTQASLAAPFTGLKSNVAFPVTKKANNDFSSLPSNGGRVQ.

The protein belongs to the RuBisCO small chain family. Heterohexadecamer of 8 large and 8 small subunits.

It localises to the plastid. The protein resides in the chloroplast. In terms of biological role, ruBisCO catalyzes two reactions: the carboxylation of D-ribulose 1,5-bisphosphate, the primary event in carbon dioxide fixation, as well as the oxidative fragmentation of the pentose substrate. Both reactions occur simultaneously and in competition at the same active site. Although the small subunit is not catalytic it is essential for maximal activity. The sequence is that of Ribulose bisphosphate carboxylase small subunit, chloroplastic from Lactuca sativa (Garden lettuce).